An 89-amino-acid chain; its full sequence is Conotoxin Lt6.4 (89 aa).

Positions 1–22 (MKLTCVPIVAMLFLMACQLITA) are cleaved as a signal peptide. Positions 23–50 (DYSREKHGYSAEKSSDKIQDSFYSKLTK) are excised as a propeptide. 3 disulfide bridges follow: Cys52-Cys67, Cys59-Cys71, and Cys66-Cys80.

The protein belongs to the conotoxin O1 superfamily. As to expression, expressed by the venom duct.

Its subcellular location is the secreted. The chain is Conotoxin Lt6.4 from Conus litteratus (Lettered cone).